A 620-amino-acid chain; its full sequence is Protein AFR1 (620 aa).

Over residues 1–12 (MEGSYLSAQENQ) the composition is skewed to polar residues. Residues 1 to 20 (MEGSYLSAQENQPIPERLIP) are disordered. Phosphoserine occurs at positions 472 and 526.

This sequence to yeast YER158C.

Acts in conjunction with the alpha-factor receptor to promote morphogenesis and adaptation. The protein is Protein AFR1 (AFR1) of Saccharomyces cerevisiae (strain ATCC 204508 / S288c) (Baker's yeast).